The following is a 361-amino-acid chain: Phosphoserine aminotransferase (361 aa).

Arg42 lines the L-glutamate pocket. Pyridoxal 5'-phosphate is bound by residues 76-77 (GR), Trp102, Thr154, Asp173, and Gln196. At Lys197 the chain carries N6-(pyridoxal phosphate)lysine. 238–239 (NT) is a binding site for pyridoxal 5'-phosphate.

This sequence belongs to the class-V pyridoxal-phosphate-dependent aminotransferase family. SerC subfamily. Homodimer. Pyridoxal 5'-phosphate is required as a cofactor.

Its subcellular location is the cytoplasm. The catalysed reaction is O-phospho-L-serine + 2-oxoglutarate = 3-phosphooxypyruvate + L-glutamate. It carries out the reaction 4-(phosphooxy)-L-threonine + 2-oxoglutarate = (R)-3-hydroxy-2-oxo-4-phosphooxybutanoate + L-glutamate. It functions in the pathway amino-acid biosynthesis; L-serine biosynthesis; L-serine from 3-phospho-D-glycerate: step 2/3. Its pathway is cofactor biosynthesis; pyridoxine 5'-phosphate biosynthesis; pyridoxine 5'-phosphate from D-erythrose 4-phosphate: step 3/5. Functionally, catalyzes the reversible conversion of 3-phosphohydroxypyruvate to phosphoserine and of 3-hydroxy-2-oxo-4-phosphonooxybutanoate to phosphohydroxythreonine. The protein is Phosphoserine aminotransferase of Idiomarina loihiensis (strain ATCC BAA-735 / DSM 15497 / L2-TR).